Here is a 469-residue protein sequence, read N- to C-terminus: Glutamate--tRNA ligase (469 aa).

The 'HIGH' region motif lies at 9–19; that stretch reads PSPTGFLHVGG. Zn(2+)-binding residues include Cys-98, Cys-100, Cys-125, and Asp-127. The 'KMSKS' region signature appears at 236–240; that stretch reads KLSKR. Lys-239 is an ATP binding site.

It belongs to the class-I aminoacyl-tRNA synthetase family. Glutamate--tRNA ligase type 1 subfamily. As to quaternary structure, monomer. The cofactor is Zn(2+).

It is found in the cytoplasm. The enzyme catalyses tRNA(Glu) + L-glutamate + ATP = L-glutamyl-tRNA(Glu) + AMP + diphosphate. Catalyzes the attachment of glutamate to tRNA(Glu) in a two-step reaction: glutamate is first activated by ATP to form Glu-AMP and then transferred to the acceptor end of tRNA(Glu). This Shewanella sp. (strain ANA-3) protein is Glutamate--tRNA ligase.